Consider the following 213-residue polypeptide: RNA chaperone ProQ (213 aa).

The segment at 105–150 is disordered; that stretch reads ESQEKAKAKRAAQTPKAAPAGKAPAKKAPKKVAVPARKTERPAKAA. Residues 115-127 show a composition bias toward low complexity; the sequence is AAQTPKAAPAGKA.

This sequence belongs to the ProQ family.

It is found in the cytoplasm. RNA chaperone with significant RNA binding, RNA strand exchange and RNA duplexing activities. This is RNA chaperone ProQ from Shewanella oneidensis (strain ATCC 700550 / JCM 31522 / CIP 106686 / LMG 19005 / NCIMB 14063 / MR-1).